A 371-amino-acid chain; its full sequence is Dual-specificity RNA methyltransferase RlmN (371 aa).

The active-site Proton acceptor is the Glu86. Positions Arg105–Asp338 constitute a Radical SAM core domain. An intrachain disulfide couples Cys112 to Cys343. Cys119, Cys123, and Cys126 together coordinate [4Fe-4S] cluster. S-adenosyl-L-methionine-binding positions include Gly169–Glu170, Ser201, Ser224–His226, and Asn300. Cys343 (S-methylcysteine intermediate) is an active-site residue. The segment covering Gln348–Pro363 has biased composition (polar residues). Residues Gln348–Ser371 form a disordered region.

The protein belongs to the radical SAM superfamily. RlmN family. The cofactor is [4Fe-4S] cluster.

The protein localises to the cytoplasm. It carries out the reaction adenosine(2503) in 23S rRNA + 2 reduced [2Fe-2S]-[ferredoxin] + 2 S-adenosyl-L-methionine = 2-methyladenosine(2503) in 23S rRNA + 5'-deoxyadenosine + L-methionine + 2 oxidized [2Fe-2S]-[ferredoxin] + S-adenosyl-L-homocysteine. It catalyses the reaction adenosine(37) in tRNA + 2 reduced [2Fe-2S]-[ferredoxin] + 2 S-adenosyl-L-methionine = 2-methyladenosine(37) in tRNA + 5'-deoxyadenosine + L-methionine + 2 oxidized [2Fe-2S]-[ferredoxin] + S-adenosyl-L-homocysteine. Functionally, specifically methylates position 2 of adenine 2503 in 23S rRNA and position 2 of adenine 37 in tRNAs. m2A2503 modification seems to play a crucial role in the proofreading step occurring at the peptidyl transferase center and thus would serve to optimize ribosomal fidelity. In Campylobacter curvus (strain 525.92), this protein is Dual-specificity RNA methyltransferase RlmN.